A 293-amino-acid chain; its full sequence is Vibriobactin-specific isochorismatase (293 aa).

One can recognise a Carrier domain in the interval 211–287 (KLTGLSLRTM…QWWQTIQANL (77 aa)). At Ser-248 the chain carries O-(pantetheine 4'-phosphoryl)serine.

Belongs to the isochorismatase family. It depends on pantetheine 4'-phosphate as a cofactor.

It carries out the reaction isochorismate + H2O = (2S,3S)-2,3-dihydroxy-2,3-dihydrobenzoate + pyruvate. Its pathway is siderophore biosynthesis; vibriobactin biosynthesis. Its function is as follows. Involved in the biosynthesis of the catechol siderophore vibriobactin. Vibriobactin is a chelating compound involved in transporting iron from the bacterial environment into the cell cytoplasm. This chain is Vibriobactin-specific isochorismatase (vibB), found in Vibrio cholerae serotype O1 (strain ATCC 39541 / Classical Ogawa 395 / O395).